Reading from the N-terminus, the 31-residue chain is Photosystem II reaction center protein T (31 aa).

A helical membrane pass occupies residues alanine 3 to phenylalanine 23.

This sequence belongs to the PsbT family. In terms of assembly, PSII is composed of 1 copy each of membrane proteins PsbA, PsbB, PsbC, PsbD, PsbE, PsbF, PsbH, PsbI, PsbJ, PsbK, PsbL, PsbM, PsbT, PsbX, PsbY, PsbZ, Psb30/Ycf12, at least 3 peripheral proteins of the oxygen-evolving complex and a large number of cofactors. It forms dimeric complexes.

Its subcellular location is the plastid. The protein localises to the cyanelle thylakoid membrane. Found at the monomer-monomer interface of the photosystem II (PS II) dimer, plays a role in assembly and dimerization of PSII. PSII is a light-driven water plastoquinone oxidoreductase, using light energy to abstract electrons from H(2)O, generating a proton gradient subsequently used for ATP formation. This is Photosystem II reaction center protein T from Cyanophora paradoxa.